A 126-amino-acid polypeptide reads, in one-letter code: Large ribosomal subunit protein bL20c (126 aa).

The protein belongs to the bacterial ribosomal protein bL20 family.

It localises to the plastid. The protein resides in the chloroplast. In terms of biological role, binds directly to 23S ribosomal RNA and is necessary for the in vitro assembly process of the 50S ribosomal subunit. It is not involved in the protein synthesizing functions of that subunit. The protein is Large ribosomal subunit protein bL20c of Lactuca sativa (Garden lettuce).